The following is a 62-amino-acid chain: MDNRLLEILVCPLCKGTLQHDRANNELICHVDKLAYPIRDGIPVMLADEARQTVEGTPVDPA.

The protein belongs to the UPF0434 family.

The polypeptide is UPF0434 protein Rpic_2808 (Ralstonia pickettii (strain 12J)).